The chain runs to 153 residues: Ribosomal RNA large subunit methyltransferase H (153 aa).

Leu71 and Gly102 together coordinate S-adenosyl-L-methionine.

Belongs to the RNA methyltransferase RlmH family. Homodimer.

The protein localises to the cytoplasm. The catalysed reaction is pseudouridine(1915) in 23S rRNA + S-adenosyl-L-methionine = N(3)-methylpseudouridine(1915) in 23S rRNA + S-adenosyl-L-homocysteine + H(+). Specifically methylates the pseudouridine at position 1915 (m3Psi1915) in 23S rRNA. This Anaeromyxobacter dehalogenans (strain 2CP-C) protein is Ribosomal RNA large subunit methyltransferase H.